The sequence spans 438 residues: Putative cytochrome P450 140 (438 aa).

A heme-binding site is contributed by C381.

The protein belongs to the cytochrome P450 family. The cofactor is heme.

The sequence is that of Putative cytochrome P450 140 (cyp140) from Mycobacterium bovis (strain ATCC BAA-935 / AF2122/97).